A 397-amino-acid polypeptide reads, in one-letter code: Riboflavin biosynthesis protein RibBA (397 aa).

The DHBP synthase stretch occupies residues 1 to 199; it reads MFHRIEEALE…IEDLIAYRRH (199 aa). Residues 26–27, Asp31, 138–142, and Glu162 each bind D-ribulose 5-phosphate; these read RE and RAGHT. Glu27 provides a ligand contact to Mg(2+). Residue His141 participates in Mg(2+) binding. The segment at 200–397 is GTP cyclohydrolase II; it reads HETLVTREVE…VNKLGHLLNL (198 aa). 250-254 serves as a coordination point for GTP; the sequence is RVHSE. Zn(2+) is bound by residues Cys255, Cys266, and Cys268. Residues Gln271, 293–295, and Thr315 each bind GTP; that span reads EGR. The active-site Proton acceptor; for GTP cyclohydrolase activity is the Asp327. Residue Arg329 is the Nucleophile; for GTP cyclohydrolase activity of the active site. The GTP site is built by Thr350 and Lys355.

The protein in the N-terminal section; belongs to the DHBP synthase family. This sequence in the C-terminal section; belongs to the GTP cyclohydrolase II family. It depends on Mg(2+) as a cofactor. The cofactor is Mn(2+). Requires Zn(2+) as cofactor.

It catalyses the reaction D-ribulose 5-phosphate = (2S)-2-hydroxy-3-oxobutyl phosphate + formate + H(+). The enzyme catalyses GTP + 4 H2O = 2,5-diamino-6-hydroxy-4-(5-phosphoribosylamino)-pyrimidine + formate + 2 phosphate + 3 H(+). It participates in cofactor biosynthesis; riboflavin biosynthesis; 2-hydroxy-3-oxobutyl phosphate from D-ribulose 5-phosphate: step 1/1. Its pathway is cofactor biosynthesis; riboflavin biosynthesis; 5-amino-6-(D-ribitylamino)uracil from GTP: step 1/4. Catalyzes the conversion of D-ribulose 5-phosphate to formate and 3,4-dihydroxy-2-butanone 4-phosphate. In terms of biological role, catalyzes the conversion of GTP to 2,5-diamino-6-ribosylamino-4(3H)-pyrimidinone 5'-phosphate (DARP), formate and pyrophosphate. The chain is Riboflavin biosynthesis protein RibBA from Bacillus cereus (strain AH187).